The following is a 366-amino-acid chain: tRNA/tmRNA (uracil-C(5))-methyltransferase (366 aa).

5 residues coordinate S-adenosyl-L-methionine: glutamine 190, tyrosine 218, asparagine 223, glutamate 239, and aspartate 299. Cysteine 324 (nucleophile) is an active-site residue. Glutamate 358 acts as the Proton acceptor in catalysis.

It belongs to the class I-like SAM-binding methyltransferase superfamily. RNA M5U methyltransferase family. TrmA subfamily.

It carries out the reaction uridine(54) in tRNA + S-adenosyl-L-methionine = 5-methyluridine(54) in tRNA + S-adenosyl-L-homocysteine + H(+). The catalysed reaction is uridine(341) in tmRNA + S-adenosyl-L-methionine = 5-methyluridine(341) in tmRNA + S-adenosyl-L-homocysteine + H(+). Functionally, dual-specificity methyltransferase that catalyzes the formation of 5-methyluridine at position 54 (m5U54) in all tRNAs, and that of position 341 (m5U341) in tmRNA (transfer-mRNA). The protein is tRNA/tmRNA (uracil-C(5))-methyltransferase of Escherichia coli O7:K1 (strain IAI39 / ExPEC).